We begin with the raw amino-acid sequence, 217 residues long: Chorionic somatomammotropin hormone 1 (217 aa).

Positions Met-1–Ala-26 are cleaved as a signal peptide. His-44 is a binding site for Zn(2+). A disulfide bridge connects residues Cys-79 and Cys-191. Glu-200 provides a ligand contact to Zn(2+). The cysteines at positions 208 and 215 are disulfide-linked.

It belongs to the somatotropin/prolactin family. As to quaternary structure, can be found in a monomeric as well as dimeric form.

It is found in the secreted. In terms of biological role, produced only during pregnancy and is involved in stimulating lactation, fetal growth and metabolism. Does not interact with GHR but only activates PRLR through zinc-induced dimerization. In Homo sapiens (Human), this protein is Chorionic somatomammotropin hormone 1 (CSH1).